We begin with the raw amino-acid sequence, 139 residues long: uncharacterized protein (139 aa).

The protein resides in the mitochondrion. This is an uncharacterized protein from Marchantia polymorpha (Common liverwort).